Here is a 420-residue protein sequence, read N- to C-terminus: COP9 signalosome complex subunit 11 (420 aa).

The PCI domain occupies 177-346 (SIHEHPSLVD…VYYKEDLPVG (170 aa)). The interval 386–420 (VEPLNRSQDMDAFELHEQSEDEEYEEEHLEEGENV) is disordered. Residues 404 to 420 (SEDEEYEEEHLEEGENV) show a composition bias toward acidic residues.

Component of a COP9 signalosome-like (CSN) complex.

It localises to the cytoplasm. The protein resides in the nucleus. In terms of biological role, component of the COP9 signalosome (CSN) complex that acts as an regulator of the ubiquitin (Ubl) conjugation pathway by mediating the deneddylation of the cullin subunit of SCF-type E3 ubiquitin-protein ligase complexes The CSN complex is involved in the regulation of the mating pheromone response. PCI8 may also be involved in transcriptional and translational control. The protein is COP9 signalosome complex subunit 11 (PCI8) of Eremothecium gossypii (strain ATCC 10895 / CBS 109.51 / FGSC 9923 / NRRL Y-1056) (Yeast).